The following is a 786-amino-acid chain: Aculeacin-A acylase (786 aa).

The first 22 residues, 1-22 (MTSSYMRLKAAAIAFGVIVATA), serve as a signal peptide directing secretion. Residues 23 to 34 (AVPSPASGREHD) constitute a propeptide that is removed on maturation. Residues 35 to 130 (GGYAALIRRA…PRDGVRAPCD (96 aa)) are substrate-binding. The propeptide at 215–229 (AAIAAALDGTSAGIG) is spacer peptide. The possible recognition-sequence of an AAC processing enzyme stretch occupies residues 220-239 (ALDGTSAGIGSNAYGLGAQA). The active-site Nucleophile is the S230. The disordered stretch occupies residues 658-689 (ACNGSPASPSTRSVGDIHTDSRGERRIPIHGG). Over residues 672-684 (GDIHTDSRGERRI) the composition is skewed to basic and acidic residues.

This sequence belongs to the peptidase S45 family. In terms of assembly, heterodimer of a small subunit and a large subunit processed from the same precursor.

It is found in the secreted. Catalyzes the hydrolysis of the palmitoyl moiety of the antifungal antibiotic, aculeacin-A, giving a hexapeptide moiety and a long chain fatty acid. In Actinoplanes utahensis, this protein is Aculeacin-A acylase (aac).